Consider the following 305-residue polypeptide: UDP-3-O-acyl-N-acetylglucosamine deacetylase (305 aa).

Residues histidine 79, histidine 238, and aspartate 242 each contribute to the Zn(2+) site. Catalysis depends on histidine 265, which acts as the Proton donor.

Belongs to the LpxC family. Requires Zn(2+) as cofactor.

The enzyme catalyses a UDP-3-O-[(3R)-3-hydroxyacyl]-N-acetyl-alpha-D-glucosamine + H2O = a UDP-3-O-[(3R)-3-hydroxyacyl]-alpha-D-glucosamine + acetate. Its pathway is glycolipid biosynthesis; lipid IV(A) biosynthesis; lipid IV(A) from (3R)-3-hydroxytetradecanoyl-[acyl-carrier-protein] and UDP-N-acetyl-alpha-D-glucosamine: step 2/6. Its function is as follows. Catalyzes the hydrolysis of UDP-3-O-myristoyl-N-acetylglucosamine to form UDP-3-O-myristoylglucosamine and acetate, the committed step in lipid A biosynthesis. In Haemophilus influenzae (strain PittEE), this protein is UDP-3-O-acyl-N-acetylglucosamine deacetylase.